The chain runs to 365 residues: Chloroplast protein FOR GROWTH AND FERTILITY 1 (365 aa).

Disordered stretches follow at residues 1-30 (MERL…LPRL) and 62-90 (YTPI…PGFL). Residues 1–79 (MERLLQPSSS…TNNSFNGSPK (79 aa)) constitute a chloroplast transit peptide. Composition is skewed to low complexity over residues 7 to 24 (PSSS…SRTS) and 62 to 77 (YTPI…FNGS). 7 consecutive transmembrane segments (helical) span residues 109 to 129 (VILI…PPAF), 139 to 159 (GWLT…LSGP), 182 to 202 (ALWG…FLLL), 218 to 238 (IVGL…SEIP), 274 to 294 (GVVH…LALP), 301 to 321 (AFLI…TAFI), and 345 to 365 (LVAI…FSLY).

As to expression, mostly expressed in leaves and flowers, to a lower extent, in stems, roots, floral bud, inflorescence and siliques, and, barely, in seedlings.

Its subcellular location is the plastid. The protein localises to the chloroplast membrane. The protein resides in the plastid membrane. Together with CGF2, essential protein which supports female gametogenesis and embryogenesis, probably by securing local energy supply. The sequence is that of Chloroplast protein FOR GROWTH AND FERTILITY 1 from Arabidopsis thaliana (Mouse-ear cress).